A 1095-amino-acid polypeptide reads, in one-letter code: Tyrosine-sulfated glycopeptide receptor 1 (1095 aa).

A helical transmembrane segment spans residues 23–43 (PHMVLFVLLYVLSISVFFLTV). N62 and N73 each carry an N-linked (GlcNAc...) asparagine glycan. LRR repeat units lie at residues 91 to 115 (ENRVTSIILSSRGLSGNLPSSVLDL), 116 to 139 (QRLSRLDLSHNRLSGPLPPGFLSA), 141 to 165 (DQLLVLDLSYNSFKGELPLQQSFGN), 170 to 195 (IFPIQTVDLSSNLLEGEILSSSVFLQ), 197 to 221 (AFNLTSFNVSNNSFTGSIPSFMCTA), 223 to 246 (PQLTKLDFSYNDFSGDLSQELSRC), 247 to 270 (SRLSVLRAGFNNLSGEIPKEIYNL), 271 to 294 (PELEQLFLPVNRLSGKIDNGITRL), 295 to 318 (TKLTLLELYSNHIEGEIPKDIGKL), 320 to 342 (KLSSLQLHVNNLMGSIPVSLANC), 344 to 366 (KLVKLNLRVNQLGGTLSAIDFSR), 367 to 391 (FQSLSILDLGNNSFTGEFPSTVYSC), 393 to 415 (MMTAMRFAGNKLTGQISPQVLEL), 416 to 439 (ESLSFFTFSDNKMTNLTGALSILQ), 441 to 466 (CKKLSTLIMAKNFYDETVPSNKDFLR), 470 to 494 (FPSLQIFGIGACRLTGEIPAWLIKL), 495 to 517 (QRVEVMDLSMNRFVGTIPGWLGT), 518 to 542 (LPDLFYLDLSDNFLTGELPKELFQL), and 566 to 589 (NPNNVTTNQQYNQLSSLPPTIYIK). N-linked (GlcNAc...) asparagine glycosylation occurs at N165. N199, N204, and N207 each carry an N-linked (GlcNAc...) asparagine glycan. N258 carries N-linked (GlcNAc...) asparagine glycosylation. An N-linked (GlcNAc...) asparagine glycan is attached at N341. N-linked (GlcNAc...) asparagine glycosylation occurs at N377. An N-linked (GlcNAc...) asparagine glycan is attached at N430. N-linked (GlcNAc...) asparagine glycosylation is found at N569, N592, N616, N627, N640, N662, and N714. LRR repeat units lie at residues 604–628 (LKVLHILELLGNNFSGSIPDELSNL), 629–652 (TNLERLDLSNNNLSGRIPWSLTGL), and 654–677 (FLSYFNVANNTLSGPIPTGTQFDT). A helical membrane pass occupies residues 721 to 741 (LVLGLFFGVSLILVLLALLVL). A phosphothreonine mark is found at T792 and T800. The Protein kinase domain occupies 803 to 1074 (FSQANIIGCG…PNIQQVVDWL (272 aa)). Residues 809 to 817 (IGCGGFGLV) and K831 contribute to the ATP site. Residues Y876 and Y916 each carry the phosphotyrosine modification. D929 acts as the Proton acceptor in catalysis. The residue at position 971 (Y971) is a Phosphotyrosine.

Belongs to the protein kinase superfamily. Ser/Thr protein kinase family. Homo- and heterodimers with PSKR1. Interacts (via C-terminus) with AHA1 and AHA2 (via the R-domain). In terms of processing, autophosphorylated. In terms of tissue distribution, expressed ubiquitously, including in the shoot apical meristem and in the elongation zone of the root meristem.

It localises to the cell membrane. The catalysed reaction is L-seryl-[protein] + ATP = O-phospho-L-seryl-[protein] + ADP + H(+). The enzyme catalyses L-threonyl-[protein] + ATP = O-phospho-L-threonyl-[protein] + ADP + H(+). Tyrosine-sulfated glycopeptide receptor with a serine/threonine-protein kinase activity. Regulates, in response to tyrosine-sulfated glycopeptide binding, a signaling cascade involved in cellular proliferation and plant growth. Not involved in PSK perception. Involved in plant immunity, with antagonistic effects on bacterial and fungal resistances. Mediates activation of the plasma membrane H(+)-ATPase by PSY1. Phosphorylates AHA2 at Thr-881. This Arabidopsis thaliana (Mouse-ear cress) protein is Tyrosine-sulfated glycopeptide receptor 1.